We begin with the raw amino-acid sequence, 436 residues long: MELDDFDPEDKEILSWDINDMKLPQNVKKTDWFQEWPDSYVKHIYSSDDRSAQRHLSSWAMRNTNNHNSRILKKSCLGVVVCSRDCSTEEGRKIYLRPAICDKARQKQQRKSCPNCNGPLKLIPCRGHGGFPVTNFWRHDGRFIFFQSKGEHDHPRPETKLEAEARRAMKKVHMASASSSLRMKGRPEMKGLPGEIPSQGSLPLTWSFQEGVQLPSGYSTPLIANAPQQNSLNDCLSFPKSYDLGGTTELEDPTSTLDPTKLYERYKFSSSKVYSAEDQFQPPVPGVYGDYDEAQTWNKNAVLGRSPTDDTYYPPYPLPVASWPCDYLPSQSSLEHSPQQVPLEPPAAQPGHHPLWTNPGGEPYEEKVPVDFSSYVPSVTYHSPQQDPFLLAYGSHPQQQYALPGKSNRWDFDEEMACMGLDHFNNEMLLNLCSLK.

A DNA-binding region (GCM) is located at residues leucine 14–methionine 169. Zn(2+) is bound by residues cysteine 76, cysteine 82, cysteine 86, cysteine 113, cysteine 116, cysteine 125, histidine 152, and histidine 154.

Polyubiquitinated in the presence of UBE2D2 and FBXW2 (in vitro).

Its subcellular location is the nucleus. Its function is as follows. Transcription factor involved in the control of expression of placental growth factor (PGF) and other placenta-specific genes. Binds to the trophoblast-specific element 2 (TSE2) of the aromatase gene enhancer. Binds to the SYDE1 promoter. Has a central role in mediating the differentiation of trophoblast cells along both the villous and extravillous pathways in placental development. The protein is Chorion-specific transcription factor GCMa (Gcm1) of Rattus norvegicus (Rat).